The following is a 367-amino-acid chain: uncharacterized protein (367 aa).

This is an uncharacterized protein from Arabidopsis thaliana (Mouse-ear cress).